The chain runs to 332 residues: Anthranilate phosphoribosyltransferase (332 aa).

5-phospho-alpha-D-ribose 1-diphosphate-binding positions include Gly79, 82–83 (GD), Ser87, 89–92 (NIST), 107–115 (KHGNRSVSS), and Ser119. Gly79 contributes to the anthranilate binding site. Ser91 provides a ligand contact to Mg(2+). Asn110 serves as a coordination point for anthranilate. Arg165 lines the anthranilate pocket. 2 residues coordinate Mg(2+): Asp223 and Glu224.

This sequence belongs to the anthranilate phosphoribosyltransferase family. As to quaternary structure, homodimer. Mg(2+) is required as a cofactor.

The enzyme catalyses N-(5-phospho-beta-D-ribosyl)anthranilate + diphosphate = 5-phospho-alpha-D-ribose 1-diphosphate + anthranilate. Its pathway is amino-acid biosynthesis; L-tryptophan biosynthesis; L-tryptophan from chorismate: step 2/5. In terms of biological role, catalyzes the transfer of the phosphoribosyl group of 5-phosphorylribose-1-pyrophosphate (PRPP) to anthranilate to yield N-(5'-phosphoribosyl)-anthranilate (PRA). The chain is Anthranilate phosphoribosyltransferase from Yersinia pestis bv. Antiqua (strain Antiqua).